A 288-amino-acid chain; its full sequence is 4-diphosphocytidyl-2-C-methyl-D-erythritol kinase (288 aa).

The active site involves Lys-8. Position 92-102 (92-102) interacts with ATP; sequence PVAAGMAGGST. Asp-134 is a catalytic residue.

Belongs to the GHMP kinase family. IspE subfamily.

The catalysed reaction is 4-CDP-2-C-methyl-D-erythritol + ATP = 4-CDP-2-C-methyl-D-erythritol 2-phosphate + ADP + H(+). It functions in the pathway isoprenoid biosynthesis; isopentenyl diphosphate biosynthesis via DXP pathway; isopentenyl diphosphate from 1-deoxy-D-xylulose 5-phosphate: step 3/6. In terms of biological role, catalyzes the phosphorylation of the position 2 hydroxy group of 4-diphosphocytidyl-2C-methyl-D-erythritol. The chain is 4-diphosphocytidyl-2-C-methyl-D-erythritol kinase from Clostridium perfringens (strain ATCC 13124 / DSM 756 / JCM 1290 / NCIMB 6125 / NCTC 8237 / Type A).